The chain runs to 238 residues: MGRKWANIVAKKTAKDGATSKVYAKFGVEIYAAAKQGEPDPESNSALKFVIERAKQAQVPKHVIDKAIDKAKGGGDETFVQGRYEGFGPNGSMVIAETLTSNVNRTIANIRTIFNKKGGNIGAAGAVSYMFDNTGVIVFKGTDPDHIFEILLDAEVDVRDVTEEEGNIVIYTEATDLHKGIAALKAAGITEFSTTELEMIAQSDVELSPEDLEIFEGLVDALEDDDDVQKVYHNVANL.

The protein belongs to the TACO1 family. YeeN subfamily.

The protein localises to the cytoplasm. This is Probable transcriptional regulatory protein YeeN from Salmonella typhi.